Reading from the N-terminus, the 218-residue chain is NAD(P)H-quinone oxidoreductase subunit I (218 aa).

4Fe-4S ferredoxin-type domains are found at residues 55 to 84 (GRIH…VDWV) and 95 to 124 (RNYS…MTEE). [4Fe-4S] cluster is bound by residues Cys64, Cys67, Cys70, Cys74, Cys104, Cys107, Cys110, and Cys114. The tract at residues 168-218 (EVQPHGVDPSRPRAGQRPDQVLSSLKQNAGGSAGNEGESATSTNTSKGSAE) is disordered. Positions 208–218 (TSTNTSKGSAE) are enriched in polar residues.

This sequence belongs to the complex I 23 kDa subunit family. As to quaternary structure, NDH-1 is composed of at least 11 different subunits. It depends on [4Fe-4S] cluster as a cofactor.

It localises to the cellular thylakoid membrane. The enzyme catalyses a plastoquinone + NADH + (n+1) H(+)(in) = a plastoquinol + NAD(+) + n H(+)(out). It carries out the reaction a plastoquinone + NADPH + (n+1) H(+)(in) = a plastoquinol + NADP(+) + n H(+)(out). In terms of biological role, NDH-1 shuttles electrons from an unknown electron donor, via FMN and iron-sulfur (Fe-S) centers, to quinones in the respiratory and/or the photosynthetic chain. The immediate electron acceptor for the enzyme in this species is believed to be plastoquinone. Couples the redox reaction to proton translocation, and thus conserves the redox energy in a proton gradient. In Synechococcus sp. (strain WH7803), this protein is NAD(P)H-quinone oxidoreductase subunit I.